A 469-amino-acid polypeptide reads, in one-letter code: Asparagine--tRNA ligase (469 aa).

This sequence belongs to the class-II aminoacyl-tRNA synthetase family. Homodimer.

It localises to the cytoplasm. It carries out the reaction tRNA(Asn) + L-asparagine + ATP = L-asparaginyl-tRNA(Asn) + AMP + diphosphate + H(+). The protein is Asparagine--tRNA ligase of Porphyromonas gingivalis (strain ATCC 33277 / DSM 20709 / CIP 103683 / JCM 12257 / NCTC 11834 / 2561).